Here is a 314-residue protein sequence, read N- to C-terminus: Ribosomal protein L11 methyltransferase (314 aa).

Residues threonine 161, glycine 182, aspartate 204, and asparagine 248 each contribute to the S-adenosyl-L-methionine site.

Belongs to the methyltransferase superfamily. PrmA family.

It is found in the cytoplasm. The enzyme catalyses L-lysyl-[protein] + 3 S-adenosyl-L-methionine = N(6),N(6),N(6)-trimethyl-L-lysyl-[protein] + 3 S-adenosyl-L-homocysteine + 3 H(+). In terms of biological role, methylates ribosomal protein L11. In Listeria monocytogenes serotype 4a (strain HCC23), this protein is Ribosomal protein L11 methyltransferase.